The following is a 464-amino-acid chain: Asparagine--tRNA ligase (464 aa).

It belongs to the class-II aminoacyl-tRNA synthetase family. Homodimer.

Its subcellular location is the cytoplasm. The catalysed reaction is tRNA(Asn) + L-asparagine + ATP = L-asparaginyl-tRNA(Asn) + AMP + diphosphate + H(+). This Xanthomonas axonopodis pv. citri (strain 306) protein is Asparagine--tRNA ligase.